Reading from the N-terminus, the 318-residue chain is NADH-ubiquinone oxidoreductase chain 1 (318 aa).

8 helical membrane-spanning segments follow: residues 3 to 23 (LINL…LTLL), 69 to 89 (MLFI…WTPL), 102 to 122 (MLFI…SGWA), 144 to 164 (VTLA…TLLS), 171 to 191 (YIWL…STLA), 222 to 242 (LFFL…IILF), 253 to 273 (ELYT…FLWI), and 294 to 314 (LPLT…LAGI).

Belongs to the complex I subunit 1 family. As to quaternary structure, core subunit of respiratory chain NADH dehydrogenase (Complex I) which is composed of 45 different subunits.

The protein resides in the mitochondrion inner membrane. The enzyme catalyses a ubiquinone + NADH + 5 H(+)(in) = a ubiquinol + NAD(+) + 4 H(+)(out). Its function is as follows. Core subunit of the mitochondrial membrane respiratory chain NADH dehydrogenase (Complex I) which catalyzes electron transfer from NADH through the respiratory chain, using ubiquinone as an electron acceptor. Essential for the catalytic activity and assembly of complex I. This is NADH-ubiquinone oxidoreductase chain 1 (MT-ND1) from Murina suilla (Brown tube-nosed bat).